The primary structure comprises 623 residues: F-box protein FBX14 (623 aa).

The tract at residues 18 to 48 (LNLNPPCSSSSSSSSAATFTNKSRNFKSSPP) is disordered. The span at 33 to 45 (AATFTNKSRNFKS) shows a compositional bias: polar residues. The region spanning 54–97 (VLENVLENVLQFLTSRCDRNAVSLVCRSWYRVEAQTRLEVFIGN) is the F-box domain. K119 provides a ligand contact to 1D-myo-inositol hexakisphosphate. The interval 126–127 (DF) is interaction with auxin-responsive proteins. 1D-myo-inositol hexakisphosphate contacts are provided by residues 158–159 (KR) and R391. The tract at residues 394 to 399 (PFDPRE) is interaction with auxin-responsive proteins. 447–449 (VFR) is a binding site for 1D-myo-inositol hexakisphosphate. Residues 451–455 (CIMGR) form an interaction with auxin-responsive proteins region. 1D-myo-inositol hexakisphosphate is bound at residue R482. The tract at residues 510–511 (AF) is interaction with auxin-responsive proteins. 1D-myo-inositol hexakisphosphate-binding positions include 530–531 (QK) and R555.

Part of a SCF (SKP1-cullin-F-box) protein ligase complex. May interact with auxin and auxin-responsive proteins.

The protein resides in the nucleus. Its pathway is protein modification; protein ubiquitination. The chain is F-box protein FBX14 (FBX14) from Arabidopsis thaliana (Mouse-ear cress).